Reading from the N-terminus, the 103-residue chain is Matrix Gla protein (103 aa).

An N-terminal signal peptide occupies residues 1–19; sequence MRSLLLLTVLAALVVAILC. Glutamate 21 is subject to 4-carboxyglutamate. Residues serine 22, serine 25, and serine 28 each carry the phosphoserine modification. In terms of domain architecture, Gla spans 51–97; sequence MAKAQERVREQRKPAYELNREACDDYKLCERYAMVYGYNAAYNRYFR. 4 positions are modified to 4-carboxyglutamate: glutamate 56, glutamate 60, glutamate 67, and glutamate 71. Residues cysteine 73 and cysteine 79 are joined by a disulfide bond.

This sequence belongs to the osteocalcin/matrix Gla protein family. Requires vitamin K-dependent gamma-carboxylation for its function.

The protein localises to the secreted. In terms of biological role, associates with the organic matrix of bone and cartilage. Thought to act as an inhibitor of bone formation. The polypeptide is Matrix Gla protein (MGP) (Oryctolagus cuniculus (Rabbit)).